A 130-amino-acid polypeptide reads, in one-letter code: UPF0251 protein MmarC7_1642 (130 aa).

Belongs to the UPF0251 family.

The chain is UPF0251 protein MmarC7_1642 from Methanococcus maripaludis (strain C7 / ATCC BAA-1331).